The primary structure comprises 172 residues: Large ribosomal subunit protein uL10 (172 aa).

The protein belongs to the universal ribosomal protein uL10 family. As to quaternary structure, part of the ribosomal stalk of the 50S ribosomal subunit. The N-terminus interacts with L11 and the large rRNA to form the base of the stalk. The C-terminus forms an elongated spine to which L12 dimers bind in a sequential fashion forming a multimeric L10(L12)X complex.

Its function is as follows. Forms part of the ribosomal stalk, playing a central role in the interaction of the ribosome with GTP-bound translation factors. In Clostridium tetani (strain Massachusetts / E88), this protein is Large ribosomal subunit protein uL10.